Reading from the N-terminus, the 21-residue chain is Cold shock protein CspSt (21 aa).

The 21-residue stretch at K1 to D21 folds into the CSD domain.

It is found in the cytoplasm. The sequence is that of Cold shock protein CspSt from Streptococcus thermophilus.